Consider the following 63-residue polypeptide: Small ribosomal subunit protein eS30 (63 aa).

A disordered region spans residues 1–33; the sequence is MGKVHGSLARAGKVKSQTPKVEKQEKPKKPQGR.

It belongs to the eukaryotic ribosomal protein eS30 family. In terms of assembly, component of the small ribosomal subunit. Mature ribosomes consist of a small (40S) and a large (60S) subunit. The 40S subunit contains about 32 different proteins and 1 molecule of RNA (18S). The 60S subunit contains 45 different proteins and 3 molecules of RNA (25S, 5.8S and 5S).

It localises to the cytoplasm. Functionally, component of the ribosome, a large ribonucleoprotein complex responsible for the synthesis of proteins in the cell. The small ribosomal subunit (SSU) binds messenger RNAs (mRNAs) and translates the encoded message by selecting cognate aminoacyl-transfer RNA (tRNA) molecules. The large subunit (LSU) contains the ribosomal catalytic site termed the peptidyl transferase center (PTC), which catalyzes the formation of peptide bonds, thereby polymerizing the amino acids delivered by tRNAs into a polypeptide chain. The nascent polypeptides leave the ribosome through a tunnel in the LSU and interact with protein factors that function in enzymatic processing, targeting, and the membrane insertion of nascent chains at the exit of the ribosomal tunnel. The polypeptide is Small ribosomal subunit protein eS30 (RPS30) (Candida albicans (strain SC5314 / ATCC MYA-2876) (Yeast)).